A 493-amino-acid polypeptide reads, in one-letter code: Cardiolipin synthase 1 (493 aa).

A run of 2 helical transmembrane segments spans residues 13–33 (FTII…IIIF) and 45–65 (WAWL…YLFF). PLD phosphodiesterase domains lie at 228–255 (MNNR…GDEY) and 406–433 (ENGF…DFRS). Active-site residues include H233, K235, D240, H411, K413, and D418.

The protein belongs to the phospholipase D family. Cardiolipin synthase subfamily.

The protein resides in the cell membrane. The enzyme catalyses 2 a 1,2-diacyl-sn-glycero-3-phospho-(1'-sn-glycerol) = a cardiolipin + glycerol. Functionally, catalyzes the reversible phosphatidyl group transfer from one phosphatidylglycerol molecule to another to form cardiolipin (CL) (diphosphatidylglycerol) and glycerol. In Staphylococcus aureus (strain MRSA252), this protein is Cardiolipin synthase 1 (cls1).